A 201-amino-acid polypeptide reads, in one-letter code: Kinetochore protein SPC24 homolog (201 aa).

Positions 78–133 (DIAAEDEIERLQKELDEEMEREFKLKDELRLVADELKDLNAQLSSIDEHKQSTKRK) form a coiled coil.

This sequence belongs to the SPC24 family. Component of the NDC80 complex, which consists of NDC80, NUF2, SPC24 and SPC25. As to expression, highly expressed in actively dividing tissues, such as shoot apical meristem (SAM), root apical meristem (RAM), vasculature, newly emerging leaves and inflorescence shoots.

It localises to the chromosome. Its subcellular location is the centromere. Acts as a component of the essential kinetochore-associated NDC80 complex, which is required for chromosome segregation and spindle checkpoint activity to ensure proper cell division. Required for the maintenance of plant architecture. This Arabidopsis thaliana (Mouse-ear cress) protein is Kinetochore protein SPC24 homolog.